The sequence spans 314 residues: BRCA2 and CDKN1A-interacting protein (314 aa).

Positions 1–56 (MASRSKRRAVESGVPQPPDPPVQRDEEEEKEVENEDEDDDDSDKEKDEEDEVIDEE) are disordered. Residues 25–56 (DEEEEKEVENEDEDDDDSDKEKDEEDEVIDEE) show a composition bias toward acidic residues. Residues serine 42 and serine 112 each carry the phosphoserine modification. Residues 59–167 (IEFEAYSLSD…EKSMVEQLDK (109 aa)) are interaction with BRCA2. The segment at 161–259 (MVEQLDKFLN…NAEEEFFYEK (99 aa)) is interaction with CDKN1A. Position 281 is a phosphoserine (serine 281).

It belongs to the BCP1 family. As to quaternary structure, interacts with BRCA2, CDKN1A and MTDH/LYRIC. Isoform 2/alpha, but not isoform 1/beta, interacts with DCTN1/p150-glued and ACTR1A/ARP1. Both isoform 1 and isoform 2 interact with alpha-, beta- and gamma-tubulins. Interacts with TENT5C; the interaction has no effect on TENT5C poly(A) polymerase function. In terms of tissue distribution, expressed at high levels in testis and skeletal muscle and at lower levels in brain, heart, kidney, liver, lung, ovary, pancreas, placenta, and spleen.

The protein resides in the nucleus. The protein localises to the cytoplasm. It is found in the cytoskeleton. Its subcellular location is the microtubule organizing center. It localises to the centrosome. The protein resides in the centriole. The protein localises to the spindle pole. During interphase, required for microtubule organizing and anchoring activities. During mitosis, required for the organization and stabilization of the spindle pole. Isoform 2/alpha is particularly important for the regulation of microtubule anchoring, microtubule stability, spindle architecture and spindle orientation, compared to isoform 1/beta. May promote cell cycle arrest by enhancing the inhibition of CDK2 activity by CDKN1A. May be required for repair of DNA damage by homologous recombination in conjunction with BRCA2. May not be involved in non-homologous end joining (NHEJ). The protein is BRCA2 and CDKN1A-interacting protein (BCCIP) of Homo sapiens (Human).